Consider the following 106-residue polypeptide: Urease subunit beta (106 aa).

This sequence belongs to the urease beta subunit family. In terms of assembly, heterotrimer of UreA (gamma), UreB (beta) and UreC (alpha) subunits. Three heterotrimers associate to form the active enzyme.

The protein resides in the cytoplasm. It catalyses the reaction urea + 2 H2O + H(+) = hydrogencarbonate + 2 NH4(+). It participates in nitrogen metabolism; urea degradation; CO(2) and NH(3) from urea (urease route): step 1/1. This chain is Urease subunit beta, found in Citrobacter koseri (strain ATCC BAA-895 / CDC 4225-83 / SGSC4696).